The chain runs to 314 residues: MLAVFGHLNPDTDAISAAMVYARLLTRQGTEAQAYRLGEPNFETAYVLRELGLEAPPLLTELPAGSKVALVDHNESAQSLPALGELDVTRVVDHHKLGDLTTINPPYLRFEPVGCTGTILLKLHREAGLSVEPQDAKLMLSAILSDTLHFRSPTTTQDDRDAVAFLAPVAGVNDVEAYALAMFAAKSDLGNTPAETLLRMDYKVFPFGDPVQPQNWGIGVIETTNPAYVFGRQQELLAAMDQVKAEDTLSGMLLSVVDILNETNRTLVLGATEAKVLREAFGAEAEGQVADLGNRISRKKQIVPTLEKYFAPEA.

Residues His-7, Asp-11, Asp-13, Asp-72, His-94, and Asp-146 each contribute to the Mn(2+) site.

The protein belongs to the PPase class C family. Mn(2+) is required as a cofactor.

The protein localises to the cytoplasm. The enzyme catalyses diphosphate + H2O = 2 phosphate + H(+). This is Probable manganese-dependent inorganic pyrophosphatase (ppaC) from Deinococcus radiodurans (strain ATCC 13939 / DSM 20539 / JCM 16871 / CCUG 27074 / LMG 4051 / NBRC 15346 / NCIMB 9279 / VKM B-1422 / R1).